A 66-amino-acid polypeptide reads, in one-letter code: Beta-defensin 13 (66 aa).

The N-terminal stretch at 1-22 is a signal peptide; sequence MRIFSLIVAGLVLLIQLHPAKG. Cystine bridges form between Cys-30-Cys-59, Cys-37-Cys-51, and Cys-41-Cys-60.

Belongs to the beta-defensin family.

It is found in the secreted. Functionally, has antibacterial activity. The polypeptide is Beta-defensin 13 (Defb13) (Rattus norvegicus (Rat)).